The chain runs to 532 residues: 2,3-bisphosphoglycerate-independent phosphoglycerate mutase (532 aa).

Mn(2+)-binding residues include Asp-15 and Ser-65. The active-site Phosphoserine intermediate is the Ser-65. Substrate is bound by residues His-126, 156–157, Arg-188, Arg-194, 258–261, and Lys-331; these read RD and RPDR. Mn(2+)-binding residues include Asp-398, His-402, Asp-439, His-440, and His-457.

It belongs to the BPG-independent phosphoglycerate mutase family. In terms of assembly, monomer. Mn(2+) is required as a cofactor.

It catalyses the reaction (2R)-2-phosphoglycerate = (2R)-3-phosphoglycerate. It participates in carbohydrate degradation; glycolysis; pyruvate from D-glyceraldehyde 3-phosphate: step 3/5. Functionally, catalyzes the interconversion of 2-phosphoglycerate and 3-phosphoglycerate. The polypeptide is 2,3-bisphosphoglycerate-independent phosphoglycerate mutase (Synechocystis sp. (strain ATCC 27184 / PCC 6803 / Kazusa)).